The primary structure comprises 335 residues: Mitochondrial uncoupling protein 4C (335 aa).

Solcar repeat units lie at residues 34 to 125 (RNLF…FRRP), 137 to 229 (LKIY…SKRT), and 238 to 329 (EGLP…LRQW). The next 6 membrane-spanning stretches (helical) occupy residues 40-57 (YVNTFIGANLAESCVFPL), 100-118 (GFSAMVTRNFIFNSLRVVL), 138-157 (KIYMALGCSFTAGCIAQALA), 204-223 (GVGPSCMRACLMTTGDVGSY), 244-264 (FVSSMCAGLTASVLSTPADVI), and 304-323 (GLMPTWFRLGPFSVLFWLSV).

The protein belongs to the mitochondrial carrier (TC 2.A.29) family.

Its subcellular location is the mitochondrion inner membrane. Functionally, mitochondrial protein that is likely to be responsible for thermogenic respiration. Likely to function in mitochondrial uncoupling i.e. creating mitochondrial proton leaks across the inner mitochondrial membrane and can therefore dissipate the mitochondrial proton gradient and convert the energy of substrate oxidation into heat instead of ATP. Involved in cold tolerance, it is required for development to the adult stage at low temperatures. The chain is Mitochondrial uncoupling protein 4C from Drosophila melanogaster (Fruit fly).